The primary structure comprises 146 residues: D-aminoacyl-tRNA deacylase (146 aa).

Residues 137–138 (GP) carry the Gly-cisPro motif, important for rejection of L-amino acids motif.

It belongs to the DTD family. In terms of assembly, homodimer.

It is found in the cytoplasm. It carries out the reaction glycyl-tRNA(Ala) + H2O = tRNA(Ala) + glycine + H(+). The catalysed reaction is a D-aminoacyl-tRNA + H2O = a tRNA + a D-alpha-amino acid + H(+). In terms of biological role, an aminoacyl-tRNA editing enzyme that deacylates mischarged D-aminoacyl-tRNAs. Also deacylates mischarged glycyl-tRNA(Ala), protecting cells against glycine mischarging by AlaRS. Acts via tRNA-based rather than protein-based catalysis; rejects L-amino acids rather than detecting D-amino acids in the active site. By recycling D-aminoacyl-tRNA to D-amino acids and free tRNA molecules, this enzyme counteracts the toxicity associated with the formation of D-aminoacyl-tRNA entities in vivo and helps enforce protein L-homochirality. The polypeptide is D-aminoacyl-tRNA deacylase (Anoxybacillus flavithermus (strain DSM 21510 / WK1)).